The primary structure comprises 2049 residues: Non-reducing polyketide synthase hmp3 (2049 aa).

The tract at residues 9 to 246 is N-terminal acylcarrier protein transacylase (SAT) domain; sequence LYFGDQTDSW…NELSIHALQH (238 aa). Residues 365–793 form the Ketosynthase family 3 (KS3) domain; sequence PGRIAIVGMA…GGNASLILED (429 aa). Residues cysteine 538, histidine 673, and histidine 712 each act as for beta-ketoacyl synthase activity in the active site. A malonyl-CoA:ACP transacylase (MAT) domain region spans residues 887-1146; it reads VFVFTGQGSH…VDFVGALGAL (260 aa). Serine 978 functions as the For acyl/malonyl transferase activity in the catalytic mechanism. The tract at residues 1265 to 1404 is N-terminal hotdog fold; that stretch reads QQIVEESSSP…AQTLQTSWNR (140 aa). Positions 1265–1573 constitute a PKS/mFAS DH domain; that stretch reads QQIVEESSSP…FHEVSNNVLD (309 aa). Residues 1269-1572 form a product template (PT) domain region; that stretch reads EESSSPSLHV…SFHEVSNNVL (304 aa). Residues 1425–1573 are C-terminal hotdog fold; the sequence is GHRMLPSILY…FHEVSNNVLD (149 aa). Residues 1626–1704 form the Carrier domain; sequence SSESELFHTI…DLRNEFARSS (79 aa). Serine 1663 is modified (O-(pantetheine 4'-phosphoryl)serine). The tract at residues 1700-1747 is disordered; it reads FARSSTSTPPSKTFSEFSIVDATPESTRSSSRAPSEKKEPAPASEKSE. Over residues 1703–1717 the composition is skewed to low complexity; the sequence is SSTSTPPSKTFSEFS. Over residues 1723–1732 the composition is skewed to polar residues; sequence PESTRSSSRA. Residues 1733–1747 show a composition bias toward basic and acidic residues; it reads PSEKKEPAPASEKSE. Positions 1761 to 1951 are thioesterase (TE) domain; sequence SPLPSARITL…KRTAIIWAKK (191 aa).

It participates in secondary metabolite biosynthesis. Functionally, non-reducing polyketide synthase; part of the gene cluster that mediates the biosynthesis of hypothemycin, a resorcylic acid lactone (RAL) that irreversibly inhibits a subset of protein kinases with a conserved cysteine in the ATP binding site such as human ERK2. The first step is performed by both PKSs hmp3 and hmp8 and leads to the production of 7',8'-dehydrozearalenol (DHZ). The highly reducing PKS hpm8 synthesizes the reduced hexaketide (7S,11S,2E,8E)-7,11-dihydroxy-dodeca-2,8-dienoate, which is transferred downstream to the non-reducing PKS hpm3. Hpm3 then extends the reduced hexaketide to a nonaketide, after which regioselective cyclization and macrolactonization affords DHZ. The next step is the conversion of DHZ into aigialomycin C and is performed by the O-methyltransferase hmp5, the FAD-binding monooxygenase hmp7, and the cytochrome P450 monooxygenase hmp1. The wide substrate tolerance of the hmp5 and hmp7 implies that the reactions from DHZ to aigialomycin C can occur in any order. The steps from aigialomycin C to hypothemycin are less well established. The FAD-linked oxidoreductase hmp9 presumably catalyzes oxidation of the C-6' hydroxyl to a ketone. The timing of this oxidation is important, since the resulting enone functional group is a Michael acceptor that can react spontaneously with glutathione, an abundant metabolite in fungal cells. The glutathione S-transferase hmp2 catalyzes cis-trans isomerization of the 7',8' double bond with equilibrium favoring the trans isomer. The hpm6-encoded transporter might preferentially pump hypothemycin out of the cell relative to the trans isomer aigialomycin A. The cis-to-trans isomerization may be coupled with C-4' hydroxylation, since all known hypothemycin analogs containing the enone functional group also have hydroxyl groups at both C-4' and C-5'. The polypeptide is Non-reducing polyketide synthase hmp3 (Hypomyces subiculosus (Nectria subiculosa)).